The chain runs to 247 residues: Fibroblast growth factor 14 (247 aa).

Disordered stretches follow at residues 1–38 (MAAA…KNRG) and 216–247 (ETVP…CKTT). Residues 15–25 (QAREQHWDRPS) show a composition bias toward basic and acidic residues.

Belongs to the heparin-binding growth factors family. Interacts with SCN8A.

The protein localises to the nucleus. Its function is as follows. Probably involved in nervous system development and function. This Rattus norvegicus (Rat) protein is Fibroblast growth factor 14 (Fgf14).